A 916-amino-acid chain; its full sequence is Dual serine/threonine and tyrosine protein kinase (916 aa).

Residues 1-19 (MQRDGTRSARRMDEGDRRT) show a composition bias toward basic and acidic residues. Residues 1 to 27 (MQRDGTRSARRMDEGDRRTGSAGRSGS) form a disordered region. The region spanning 641-895 (PRIGRELGRG…PLMGIVQPML (255 aa)) is the Protein kinase domain. ATP contacts are provided by residues 647–655 (LGRGQYGVV) and lysine 670. The active-site Proton acceptor is the aspartate 766.

Belongs to the protein kinase superfamily. Ser/Thr protein kinase family.

The protein resides in the cytoplasm. Its subcellular location is the cell membrane. It localises to the apical cell membrane. The protein localises to the basolateral cell membrane. It is found in the cell junction. It carries out the reaction L-seryl-[protein] + ATP = O-phospho-L-seryl-[protein] + ADP + H(+). The enzyme catalyses L-threonyl-[protein] + ATP = O-phospho-L-threonyl-[protein] + ADP + H(+). The catalysed reaction is L-tyrosyl-[protein] + ATP = O-phospho-L-tyrosyl-[protein] + ADP + H(+). May act as a positive regulator of ERK phosphorylation downstream of fibroblast growth factor-receptor activation. May induce both caspase-dependent apoptosis and caspase-independent cell death. May play a role in the embryonic development. In Xenopus laevis (African clawed frog), this protein is Dual serine/threonine and tyrosine protein kinase (dstyk).